The primary structure comprises 122 residues: Large ribosomal subunit protein uL14 (122 aa).

Belongs to the universal ribosomal protein uL14 family. Part of the 50S ribosomal subunit. Forms a cluster with proteins L3 and L19. In the 70S ribosome, L14 and L19 interact and together make contacts with the 16S rRNA in bridges B5 and B8.

Binds to 23S rRNA. Forms part of two intersubunit bridges in the 70S ribosome. The polypeptide is Large ribosomal subunit protein uL14 (Flavobacterium psychrophilum (strain ATCC 49511 / DSM 21280 / CIP 103535 / JIP02/86)).